A 363-amino-acid polypeptide reads, in one-letter code: MHRSESSYCREETTLCQGVNSTWVPPADTVPEVSLIPSSPPAPDSPAPSPKPGYGFSTCEEKHGDPRIRRPMNAFMVWAKDERKRLAQQNPDLHNAVLSKMLGQSWKNLTSVEKRPFVEEAERLRVQHLQDHPNYKYRPRRKKQAKKLKRMDPSPLLRNEGFTRGQPMVNLSHFRNLHPLGGSGELESYGLPTPEMSPLDVLEPSEPAFFPPHMREDTDPVPFRTYQHGMDFSQEKTMREISLPYSSSPSHMGSFLRTPTPSAFYYKAHGGSPVCTPLGQLSPPPEAPALDAMDHLNQAELWGDFDRNEFDQYLNMSRTQRPGYSFPMSKLGAPRTIPCEENSLISALSDASTAMYYTPCITG.

Positions 20 to 66 (NSTWVPPADTVPEVSLIPSSPPAPDSPAPSPKPGYGFSTCEEKHGDP) are disordered. A compositionally biased stretch (pro residues) spans 38 to 51 (SSPPAPDSPAPSPK). The HMG box DNA-binding region spans 68–136 (IRRPMNAFMV…QHLQDHPNYK (69 aa)). Interaction with DNA stretches follow at residues 70–83 (RPMNAFMVWAKDER) and 94–106 (HNAVLSKMLGQSW). Positions 129 to 163 (LQDHPNYKYRPRRKKQAKKLKRMDPSPLLRNEGFT) are disordered. Residues 135–149 (YKYRPRRKKQAKKLK) show a composition bias toward basic residues. The interval 149–210 (KRMDPSPLLR…VLEPSEPAFF (62 aa)) is important for transcriptional activation. The 127-residue stretch at 236–362 (KTMREISLPY…TAMYYTPCIT (127 aa)) folds into the Sox C-terminal domain. The short motif at 308-316 (NEFDQYLNM) is the 9aaTAD element.

As to expression, expressed in the adult spleen, lung, heart and kidney, and at a lower level in the adult testis, liver and brain.

The protein localises to the nucleus. Probable transcription factor. Binds to the consensus DNA sequence 5'-AACAAT-3'. Also binds 5'-CACAAT-3' and 5'-AATAAT-3' with similar affinity. This chain is Transcription factor Sox-18A (sox18-a), found in Xenopus laevis (African clawed frog).